Consider the following 196-residue polypeptide: Ribonuclease HII (196 aa).

The region spanning 9-196 (NLIAGVDEVG…APVKRALNLV (188 aa)) is the RNase H type-2 domain. Residues aspartate 15, glutamate 16, and aspartate 107 each contribute to the a divalent metal cation site.

Belongs to the RNase HII family. The cofactor is Mn(2+). It depends on Mg(2+) as a cofactor.

The protein resides in the cytoplasm. It carries out the reaction Endonucleolytic cleavage to 5'-phosphomonoester.. In terms of biological role, endonuclease that specifically degrades the RNA of RNA-DNA hybrids. This is Ribonuclease HII from Proteus mirabilis (strain HI4320).